The following is a 214-amino-acid chain: GTP-binding nuclear protein GSP1/Ran (214 aa).

One can recognise a Small GTPase Ran-type domain in the interval E4–N168. D15–T22 contacts GTP. A switch-I region spans residues N34–V42. GTP contacts are provided by residues G65, N119 to D122, and S147 to K149. The switch-II stretch occupies residues G65–Q81.

The protein belongs to the small GTPase superfamily. Ran family. In terms of assembly, found in a nuclear export complex with RanGTP, exportin and pre-miRNA.

It localises to the nucleus. In terms of biological role, GTP-binding protein involved in nucleocytoplasmic transport. Required for the import of protein into the nucleus and also for RNA export. Involved in chromatin condensation and control of cell cycle. This chain is GTP-binding nuclear protein GSP1/Ran (GSP1), found in Yarrowia lipolytica (strain CLIB 122 / E 150) (Yeast).